Here is a 313-residue protein sequence, read N- to C-terminus: Malate dehydrogenase (313 aa).

Residues 11–16 (GAGSIG) and D35 each bind NAD(+). Substrate-binding residues include R84 and R90. Residues N97 and 120-122 (VTN) contribute to the NAD(+) site. Residues N122 and R153 each contribute to the substrate site. H177 functions as the Proton acceptor in the catalytic mechanism.

Belongs to the LDH/MDH superfamily. MDH type 3 family.

The enzyme catalyses (S)-malate + NAD(+) = oxaloacetate + NADH + H(+). Its function is as follows. Catalyzes the reversible oxidation of malate to oxaloacetate. This chain is Malate dehydrogenase, found in Ehrlichia chaffeensis (strain ATCC CRL-10679 / Arkansas).